We begin with the raw amino-acid sequence, 217 residues long: Probable GTP-binding protein EngB (217 aa).

The region spanning 29-213 (GPSEVAFAGR…RQAIAQTVGI (185 aa)) is the EngB-type G domain. GTP-binding positions include 37–44 (GRSNVGKS), 64–68 (GRTQE), 91–94 (DMPG), 158–161 (TKTD), and 192–194 (TSS). 2 residues coordinate Mg(2+): S44 and T66.

It belongs to the TRAFAC class TrmE-Era-EngA-EngB-Septin-like GTPase superfamily. EngB GTPase family. Requires Mg(2+) as cofactor.

Functionally, necessary for normal cell division and for the maintenance of normal septation. This Rhizobium etli (strain CIAT 652) protein is Probable GTP-binding protein EngB.